Consider the following 256-residue polypeptide: MAVGKNKRLSKGKKGLKKKTLDPFTRKDWYQIKAPSSFQIRDVGKTLVNRTTGLKNANDSLKGRIIEVSLADLQKDEDHAFRKVKLRVDEVQGKNCLTNFHGLDFTSDKLRSLVRKWQSLIEANITVKTTDDYLLRLFAIAFTKRRPNQIKKTTYAASSQIRAIRKKMTEIIQREASTCTLTQLTAKLIPEVIGREIEKATQGIYPLQNVHIRKVKLLKAPKFDLGALLNLHGESNTDEQGQKVEREFKEKVLEQV.

A2 is modified (N-acetylalanine; partial).

It belongs to the eukaryotic ribosomal protein eS1 family. Component of the small ribosomal subunit. Mature ribosomes consist of a small (40S) and a large (60S) subunit. The 40S subunit contains about 33 different proteins and 1 molecule of RNA (18S). The 60S subunit contains about 49 different proteins and 3 molecules of RNA (25S, 5.8S and 5S).

It is found in the cytoplasm. In Sclerotinia sclerotiorum (strain ATCC 18683 / 1980 / Ss-1) (White mold), this protein is Small ribosomal subunit protein eS1 (rps1).